Reading from the N-terminus, the 169-residue chain is Phosphopantetheine adenylyltransferase (169 aa).

S10 is a substrate binding site. ATP contacts are provided by residues 10–11 (SF) and H18. The substrate site is built by K42, L74, and R88. ATP contacts are provided by residues 89-91 (GLR), E99, and 124-130 (YAFLSSS).

This sequence belongs to the bacterial CoaD family. As to quaternary structure, homohexamer. Mg(2+) is required as a cofactor.

Its subcellular location is the cytoplasm. The enzyme catalyses (R)-4'-phosphopantetheine + ATP + H(+) = 3'-dephospho-CoA + diphosphate. It functions in the pathway cofactor biosynthesis; coenzyme A biosynthesis; CoA from (R)-pantothenate: step 4/5. Reversibly transfers an adenylyl group from ATP to 4'-phosphopantetheine, yielding dephospho-CoA (dPCoA) and pyrophosphate. The chain is Phosphopantetheine adenylyltransferase from Geobacillus sp. (strain WCH70).